The following is a 513-amino-acid chain: ATP synthase subunit alpha (513 aa).

169 to 176 (GDRQTGKS) lines the ATP pocket.

It belongs to the ATPase alpha/beta chains family. In terms of assembly, F-type ATPases have 2 components, CF(1) - the catalytic core - and CF(0) - the membrane proton channel. CF(1) has five subunits: alpha(3), beta(3), gamma(1), delta(1), epsilon(1). CF(0) has three main subunits: a(1), b(2) and c(9-12). The alpha and beta chains form an alternating ring which encloses part of the gamma chain. CF(1) is attached to CF(0) by a central stalk formed by the gamma and epsilon chains, while a peripheral stalk is formed by the delta and b chains.

Its subcellular location is the cell inner membrane. The catalysed reaction is ATP + H2O + 4 H(+)(in) = ADP + phosphate + 5 H(+)(out). Its function is as follows. Produces ATP from ADP in the presence of a proton gradient across the membrane. The alpha chain is a regulatory subunit. The polypeptide is ATP synthase subunit alpha (Sodalis glossinidius (strain morsitans)).